A 133-amino-acid chain; its full sequence is Cytochrome b5 (133 aa).

In terms of domain architecture, Cytochrome b5 heme-binding spans 4-86 (EKEYILDEIS…LKNYLVGNFK (83 aa)). Residues H45 and H69 each coordinate heme. The chain crosses the membrane as a helical span at residues 108-128 (SGTGIMLIVLMALFAIAYGYY).

This sequence belongs to the cytochrome b5 family. In terms of assembly, interacts with alternative squalene epoxidase PHATRDRAFT_45494.

The protein localises to the endoplasmic reticulum membrane. In terms of biological role, hemoprotein that functions as an electron carrier for membrane bound monooxygenases involved in sterol biosynthesis. This is Cytochrome b5 from Phaeodactylum tricornutum (strain CCAP 1055/1).